A 350-amino-acid polypeptide reads, in one-letter code: Phosphotriesterase-related protein (350 aa).

H22, H24, E169, H201, H230, and D298 together coordinate a divalent metal cation.

Belongs to the metallo-dependent hydrolases superfamily. Phosphotriesterase family. It depends on a divalent metal cation as a cofactor.

The sequence is that of Phosphotriesterase-related protein from Drosophila yakuba (Fruit fly).